A 239-amino-acid chain; its full sequence is Flagellin B3 (239 aa).

The propeptide occupies M1–G11. Residues N115 and N128 are each glycosylated (N-linked (GlcNAc...) asparagine).

This sequence belongs to the archaeal flagellin family. Post-translationally, N-linked glycans consist of the 779 Da trisaccharide beta-ManNAc(Thr)-(1-4)-beta-GlcNAc3NAcA-(1-3)-beta-GlcNAc.

It localises to the archaeal flagellum. Flagellin is the subunit protein which polymerizes to form the filaments of archaeal flagella. This is Flagellin B3 (flaB3) from Methanococcus voltae.